Consider the following 612-residue polypeptide: Chaperone protein DnaK (612 aa).

Position 173 is a phosphothreonine; by autocatalysis (T173). The span at 524–544 (DDKVSEEDKQKAESAKDELKQ) shows a compositional bias: basic and acidic residues. 2 disordered regions span residues 524–560 (DDKVSEEDKQKAESAKDELKQALESGDMEQVKAKKDA) and 572–612 (LYEQ…DDKK). A compositionally biased stretch (low complexity) spans 574-586 (EQVQQEAQQASGE). Positions 587–612 (QGEESGNQDDDVVDADYSEVDDDDKK) are enriched in acidic residues.

This sequence belongs to the heat shock protein 70 family.

Acts as a chaperone. The chain is Chaperone protein DnaK from Oceanobacillus iheyensis (strain DSM 14371 / CIP 107618 / JCM 11309 / KCTC 3954 / HTE831).